We begin with the raw amino-acid sequence, 388 residues long: S-adenosylmethionine synthase (388 aa).

Position 17 (His-17) interacts with ATP. Asp-19 contacts Mg(2+). Residue Glu-45 participates in K(+) binding. L-methionine contacts are provided by Glu-58 and Gln-101. Positions 101-111 are flexible loop; the sequence is QSPDIGQGVDT. ATP is bound by residues 160-162, 226-227, Asp-235, 241-242, Ala-258, and Lys-262; these read DGK, RF, and RK. Asp-235 provides a ligand contact to L-methionine. Lys-266 is an L-methionine binding site.

This sequence belongs to the AdoMet synthase family. As to quaternary structure, homotetramer; dimer of dimers. Mg(2+) serves as cofactor. It depends on K(+) as a cofactor.

The protein localises to the cytoplasm. The catalysed reaction is L-methionine + ATP + H2O = S-adenosyl-L-methionine + phosphate + diphosphate. The protein operates within amino-acid biosynthesis; S-adenosyl-L-methionine biosynthesis; S-adenosyl-L-methionine from L-methionine: step 1/1. Functionally, catalyzes the formation of S-adenosylmethionine (AdoMet) from methionine and ATP. The overall synthetic reaction is composed of two sequential steps, AdoMet formation and the subsequent tripolyphosphate hydrolysis which occurs prior to release of AdoMet from the enzyme. This Anaeromyxobacter sp. (strain K) protein is S-adenosylmethionine synthase.